A 538-amino-acid chain; its full sequence is Phosphoenolpyruvate carboxykinase (ATP) (538 aa).

Residues Arg-64, Tyr-206, and Lys-212 each coordinate substrate. ATP contacts are provided by residues Lys-212, His-231, and 247 to 255; that span reads GLSGTGKTT. Mn(2+)-binding residues include Lys-212 and His-231. Asp-268 contributes to the Mn(2+) binding site. ATP is bound by residues Glu-296, Arg-332, 448-449, and Thr-454; that span reads RI. Arg-332 lines the substrate pocket.

Belongs to the phosphoenolpyruvate carboxykinase (ATP) family. Monomer. Mn(2+) is required as a cofactor.

The protein resides in the cytoplasm. It carries out the reaction oxaloacetate + ATP = phosphoenolpyruvate + ADP + CO2. It functions in the pathway carbohydrate biosynthesis; gluconeogenesis. In terms of biological role, involved in the gluconeogenesis. Catalyzes the conversion of oxaloacetate (OAA) to phosphoenolpyruvate (PEP) through direct phosphoryl transfer between the nucleoside triphosphate and OAA. In Enterobacter sp. (strain 638), this protein is Phosphoenolpyruvate carboxykinase (ATP).